A 131-amino-acid polypeptide reads, in one-letter code: MAKGHRSKIKRERNEVRDTRPSAKLSYARVSVQKACFVLDAIRGKSVNEALAIVTYNPRYASSLVKKLLESAIANAENNYPEKNYKAENLYVAECFANKGPTMKRIHPRAQGRAYRIEKRMSHITIVLDER.

The segment covering 1-11 (MAKGHRSKIKR) has biased composition (basic residues). The disordered stretch occupies residues 1 to 20 (MAKGHRSKIKRERNEVRDTR).

This sequence belongs to the universal ribosomal protein uL22 family. As to quaternary structure, part of the 50S ribosomal subunit.

Functionally, this protein binds specifically to 23S rRNA; its binding is stimulated by other ribosomal proteins, e.g. L4, L17, and L20. It is important during the early stages of 50S assembly. It makes multiple contacts with different domains of the 23S rRNA in the assembled 50S subunit and ribosome. Its function is as follows. The globular domain of the protein is located near the polypeptide exit tunnel on the outside of the subunit, while an extended beta-hairpin is found that lines the wall of the exit tunnel in the center of the 70S ribosome. This Agathobacter rectalis (strain ATCC 33656 / DSM 3377 / JCM 17463 / KCTC 5835 / VPI 0990) (Eubacterium rectale) protein is Large ribosomal subunit protein uL22.